A 31-amino-acid chain; its full sequence is Photosystem II reaction center protein T (31 aa).

A helical transmembrane segment spans residues 3-23 (ALVYTFLLVGTLGIIFFSIFF).

Belongs to the PsbT family. As to quaternary structure, PSII is composed of 1 copy each of membrane proteins PsbA, PsbB, PsbC, PsbD, PsbE, PsbF, PsbH, PsbI, PsbJ, PsbK, PsbL, PsbM, PsbT, PsbY, PsbZ, Psb30/Ycf12, at least 3 peripheral proteins of the oxygen-evolving complex and a large number of cofactors. It forms dimeric complexes.

The protein resides in the plastid. It localises to the chloroplast thylakoid membrane. Found at the monomer-monomer interface of the photosystem II (PS II) dimer, plays a role in assembly and dimerization of PSII. PSII is a light-driven water plastoquinone oxidoreductase, using light energy to abstract electrons from H(2)O, generating a proton gradient subsequently used for ATP formation. This chain is Photosystem II reaction center protein T, found in Bigelowiella natans (Pedinomonas minutissima).